Reading from the N-terminus, the 782-residue chain is Ribosome biogenesis protein ERB1 (782 aa).

2 disordered regions span residues 1–123 (MGSK…RIEK) and 339–361 (PEEYLPSKEEREEWENADPEDRE). Over residues 35 to 86 (SEDEEDYLPSDDDDDVEDSENEGTGASEDDDDDDDDDDILSDDIPSDVDSEE) the composition is skewed to acidic residues. The span at 105–123 (VDPKREEDDGADRNYRIEK) shows a compositional bias: basic and acidic residues. WD repeat units follow at residues 433–472 (GHEGRVRSVSVDPTGVALATGGDDGTVRVWELLTGRQVWS), 476–516 (NSEE…VTPA), 567–609 (TVRS…TQIP), 612–650 (KLSGLAQTAAFHPLRPLFFVATQRTIRCYDLQKLELVKV), 653–692 (PGAKWISSFDIHPGGDNLIVGSYDKRLLWHDLDLSNRPYK), 696–736 (FHGQ…DQLE), and 752–782 (VSKLGVLDIDWHPREPWCVSAGADGTARLWM).

The protein belongs to the WD repeat BOP1/ERB1 family. In terms of assembly, component of the NOP7 complex, composed of ERB1, NOP7 and YTM1. The complex is held together by ERB1, which interacts with NOP7 via its N-terminal domain and with YTM1 via a high-affinity interaction between the seven-bladed beta-propeller domains of the 2 proteins. The NOP7 complex associates with the 66S pre-ribosome.

It is found in the nucleus. It localises to the nucleolus. The protein resides in the nucleoplasm. Component of the NOP7 complex, which is required for maturation of the 25S and 5.8S ribosomal RNAs and formation of the 60S ribosome. The polypeptide is Ribosome biogenesis protein ERB1 (Chaetomium globosum (strain ATCC 6205 / CBS 148.51 / DSM 1962 / NBRC 6347 / NRRL 1970) (Soil fungus)).